A 435-amino-acid polypeptide reads, in one-letter code: Cell adhesion molecule 2 (435 aa).

A signal peptide spans 1 to 24; the sequence is MIWKRSAVLRFYSVCGLLLQGSQG. Topologically, residues 25-367 are extracellular; that stretch reads QFPLTQNVTV…SLAGQNGPDH (343 aa). In terms of domain architecture, Ig-like V-type spans 27–119; the sequence is PLTQNVTVVE…PVKTSKAYLT (93 aa). 2 N-linked (GlcNAc...) asparagine glycosylation sites follow: Asn31 and Asn51. Intrachain disulfides connect Cys44-Cys104, Cys146-Cys203, and Cys248-Cys296. Ig-like C2-type domains are found at residues 127-219 and 227-312; these read PQIS…VAMQ and PSVK…YVLI. A glycan (N-linked (GlcNAc...) asparagine) is linked at Asn291. Residues 337-351 are compositionally biased toward low complexity; sequence SVTITTSPSTSASSS. Positions 337-360 are disordered; it reads SVTITTSPSTSASSSSRRDPNSLA. The chain crosses the membrane as a helical span at residues 368–388; the sequence is ALIGGIVAVVVFVTLCSIFLL. The Cytoplasmic segment spans residues 389–435; that stretch reads GRYLARHKGTYLTNEAKGAEDAPDADTAIINAEGSQVNAEEKKEYFI. Position 423 is a phosphoserine (Ser423).

Belongs to the nectin family. Glycosylation at Asn-51 reduces adhesive binding.

It is found in the cell membrane. The protein resides in the synapse. It localises to the cell projection. Its subcellular location is the axon. Its function is as follows. Adhesion molecule that engages in homo- and heterophilic interactions with the other nectin-like family members, leading to cell aggregation. Important for synapse organization, providing regulated trans-synaptic adhesion. Preferentially binds to oligodendrocytes. The polypeptide is Cell adhesion molecule 2 (Cadm2) (Mus musculus (Mouse)).